The following is a 122-amino-acid chain: Large ribosomal subunit protein uL18 (122 aa).

The protein belongs to the universal ribosomal protein uL18 family. As to quaternary structure, part of the 50S ribosomal subunit; part of the 5S rRNA/L5/L18/L25 subcomplex. Contacts the 5S and 23S rRNAs.

In terms of biological role, this is one of the proteins that bind and probably mediate the attachment of the 5S RNA into the large ribosomal subunit, where it forms part of the central protuberance. The polypeptide is Large ribosomal subunit protein uL18 (Mycobacterium avium (strain 104)).